A 309-amino-acid polypeptide reads, in one-letter code: HPr kinase/phosphorylase (309 aa).

Residues histidine 138 and lysine 159 contribute to the active site. 153-160 is an ATP binding site; the sequence is GKSGVGKS. Residue serine 160 participates in Mg(2+) binding. Aspartate 177 acts as the Proton acceptor; for phosphorylation activity. Proton donor; for dephosphorylation activity in catalysis. An important for the catalytic mechanism of both phosphorylation and dephosphorylation region spans residues 201–210; the sequence is LEIRGLGIIN. Glutamate 202 contributes to the Mg(2+) binding site. The active site involves arginine 243. Residues 264–269 form an important for the catalytic mechanism of dephosphorylation region; sequence PVRPGR.

Belongs to the HPrK/P family. In terms of assembly, homohexamer. It depends on Mg(2+) as a cofactor.

The catalysed reaction is [HPr protein]-L-serine + ATP = [HPr protein]-O-phospho-L-serine + ADP + H(+). The enzyme catalyses [HPr protein]-O-phospho-L-serine + phosphate + H(+) = [HPr protein]-L-serine + diphosphate. In terms of biological role, catalyzes the ATP- as well as the pyrophosphate-dependent phosphorylation of a specific serine residue in HPr, a phosphocarrier protein of the phosphoenolpyruvate-dependent sugar phosphotransferase system (PTS). HprK/P also catalyzes the pyrophosphate-producing, inorganic phosphate-dependent dephosphorylation (phosphorolysis) of seryl-phosphorylated HPr (P-Ser-HPr). The two antagonistic activities of HprK/P are regulated by several intracellular metabolites, which change their concentration in response to the absence or presence of rapidly metabolisable carbon sources (glucose, fructose, etc.) in the growth medium. Also phosphorylates/dephosphorylates the HPr-like catabolite repression protein crh on a specific serine residue. Therefore, by controlling the phosphorylation state of HPr and crh, HPrK/P is a sensor enzyme that plays a major role in the regulation of carbon metabolism and sugar transport: it mediates carbon catabolite repression (CCR), and regulates PTS-catalyzed carbohydrate uptake and inducer exclusion. This is HPr kinase/phosphorylase from Geobacillus thermodenitrificans (strain NG80-2).